The following is a 238-amino-acid chain: Ribosomal RNA small subunit methyltransferase G (238 aa).

Residues Gly77, Phe82, 128-129 (AE), and Arg146 each bind S-adenosyl-L-methionine. A disordered region spans residues 216–238 (KKRQTPKKYPRKPGTPNKEPLLK).

This sequence belongs to the methyltransferase superfamily. RNA methyltransferase RsmG family.

It localises to the cytoplasm. Specifically methylates the N7 position of guanine in position 535 of 16S rRNA. This is Ribosomal RNA small subunit methyltransferase G from Macrococcus caseolyticus (strain JCSC5402) (Macrococcoides caseolyticum).